We begin with the raw amino-acid sequence, 49 residues long: Large ribosomal subunit protein bL33B (49 aa).

The protein belongs to the bacterial ribosomal protein bL33 family.

This Oceanobacillus iheyensis (strain DSM 14371 / CIP 107618 / JCM 11309 / KCTC 3954 / HTE831) protein is Large ribosomal subunit protein bL33B.